A 165-amino-acid chain; its full sequence is Putative pre-16S rRNA nuclease (165 aa).

Belongs to the YqgF nuclease family.

It localises to the cytoplasm. Functionally, could be a nuclease involved in processing of the 5'-end of pre-16S rRNA. The sequence is that of Putative pre-16S rRNA nuclease from Sinorhizobium medicae (strain WSM419) (Ensifer medicae).